The following is an 800-amino-acid chain: Ion-translocating oxidoreductase complex subunit C (800 aa).

4Fe-4S ferredoxin-type domains lie at 367 to 398 and 408 to 437; these read DEFS…QQLY and KARG…VQYY. [4Fe-4S] cluster contacts are provided by Cys-378, Cys-381, Cys-384, Cys-388, Cys-417, Cys-420, Cys-423, and Cys-427. Composition is skewed to low complexity over residues 536-553, 571-583, 599-617, 647-667, and 675-690; these read GATP…APAP, AKQA…PAAT, AAIA…APAA, AKQA…ADPA, and AAIA…KQAA. Disordered stretches follow at residues 536–558, 571–631, and 647–706; these read GATP…DDPR, AKQA…QDDP, and AKQA…ENTD. Residues 693-705 are compositionally biased toward polar residues; sequence HATTEPVTVQENT.

This sequence belongs to the 4Fe4S bacterial-type ferredoxin family. RnfC subfamily. In terms of assembly, the complex is composed of six subunits: RnfA, RnfB, RnfC, RnfD, RnfE and RnfG. The cofactor is [4Fe-4S] cluster.

The protein localises to the cell inner membrane. In terms of biological role, part of a membrane-bound complex that couples electron transfer with translocation of ions across the membrane. The protein is Ion-translocating oxidoreductase complex subunit C of Edwardsiella ictaluri (strain 93-146).